We begin with the raw amino-acid sequence, 220 residues long: Thiopurine S-methyltransferase (220 aa).

4 residues coordinate S-adenosyl-L-methionine: Trp-14, Leu-49, Glu-70, and Arg-127.

Belongs to the class I-like SAM-binding methyltransferase superfamily. TPMT family.

It is found in the cytoplasm. The catalysed reaction is S-adenosyl-L-methionine + a thiopurine = S-adenosyl-L-homocysteine + a thiopurine S-methylether.. The polypeptide is Thiopurine S-methyltransferase (Gluconobacter oxydans (strain 621H) (Gluconobacter suboxydans)).